A 340-amino-acid chain; its full sequence is MKLAVIGGDGIGPEVTAEALKVLNAVRDDIETTDYDLGARRYLKNGELLTDEDLASLREHDAILLGAIGAPGSVPPGILERGLLLKMRFALDHHVNLRPSKLYDGVESPLRNPGKIDFVVVREGTEGAYTGNGGAIRVGTPHEIANETSVNTRYGAERVIRYAFELAQSRRKKLTLVHKTNVLVHGGGLWQRTVDEVAKEYPEVAVDYNHIDAATIYLVTDPSRFDVIVTDNLFGDILTDEAGAVSGGIGLAASGNIDATGTNPSMFEPVHGSAPDIAGQGIADPTAAILSAAMLLRHLGDEDNAVRIETAIAADVAGRDNSQPISTTEVGDRIVKALQS.

4 residues coordinate substrate: R88, R98, R122, and D212. 3 residues coordinate Mg(2+): D212, D236, and D240. 272-284 (GSAPDIAGQGIAD) contacts NAD(+).

This sequence belongs to the isocitrate and isopropylmalate dehydrogenases family. LeuB type 2 subfamily. In terms of assembly, homodimer. It depends on Mg(2+) as a cofactor. Requires Mn(2+) as cofactor.

The protein resides in the cytoplasm. It catalyses the reaction (2R,3S)-3-isopropylmalate + NAD(+) = 4-methyl-2-oxopentanoate + CO2 + NADH. It functions in the pathway amino-acid biosynthesis; L-leucine biosynthesis; L-leucine from 3-methyl-2-oxobutanoate: step 3/4. In terms of biological role, catalyzes the oxidation of 3-carboxy-2-hydroxy-4-methylpentanoate (3-isopropylmalate) to 3-carboxy-4-methyl-2-oxopentanoate. The product decarboxylates to 4-methyl-2 oxopentanoate. This chain is 3-isopropylmalate dehydrogenase (leuB), found in Corynebacterium glutamicum (strain ATCC 13032 / DSM 20300 / JCM 1318 / BCRC 11384 / CCUG 27702 / LMG 3730 / NBRC 12168 / NCIMB 10025 / NRRL B-2784 / 534).